Consider the following 147-residue polypeptide: MAGKKAPYGEFAGRKLKLKRKKFRWSDIRYKRRVLRLKEKSDPLEGAPQAKGIVLEKIAVEAKQPNSAMRKAVRVQLIKNGKVVTAFTPGDGAINHIDEHDEVIIEGIGGPKGGSMGDIPGIRYKVVKVNRVSLKELVKGRKEKPRR.

This sequence belongs to the universal ribosomal protein uS12 family. Part of the 30S ribosomal subunit.

Its function is as follows. With S4 and S5 plays an important role in translational accuracy. Located at the interface of the 30S and 50S subunits. This is Small ribosomal subunit protein uS12 from Thermococcus celer.